The chain runs to 627 residues: Sister chromatid cohesion 1 protein 1 (627 aa).

Disordered regions lie at residues 211–294 (GDDE…TATS), 395–416 (MHNH…NLDS), and 461–510 (GDDV…VAEE). Basic and acidic residues-rich tracts occupy residues 254-263 (EQQENRRDGF), 272-282 (IPDKEEHDRPQ), and 395-408 (MHNH…ERSD). The segment covering 467–487 (MPSTPSARGAASINNIEISSK) has biased composition (polar residues).

It belongs to the rad21 family. Component of the cohesin complex. In terms of tissue distribution, isoform 2 is expressed at low levels in buds, leaves and roots, whereas expression of isoform 1 is confined to buds.

The protein resides in the nucleus. In terms of biological role, involved in chromosome condensation, pairing and segregation during meiosis. Responsible for cohesion between replicated sister chromatids. The chain is Sister chromatid cohesion 1 protein 1 (SYN1) from Arabidopsis thaliana (Mouse-ear cress).